The following is a 728-amino-acid chain: MSTEAKCPFNHAAGSGTSNRDWWPHQLNLGILRQHSSLADPMDKGFNYAEEFKSLDLAAVKHDLAALMTVSQDWWPADFGHYGGLFIRMAWHAAGTYRTGDGRGGAGSGQQRFAPLNSWPDNVNLDKARRLLWPIKQKYGKKISWADLIVLTGNVALESMGFKTFGFGGGREDVWEPDQDVYWGSETTWLADKRYSGVRDLENPLAAVQMGLIYVNPEGPNGNPDPAKAAVDIRETFARMAMNDEETVALIAGGHTFGKTHGAGPASHVGPEPEAAGIEEQGLGWRSSFGSGKGSDAITSGLEVIWTSTPTKWSNNFFWNLFGYEWELTKSPAGAHQWKPNGDAGANSIPDPYDPSRRRGPTMLTTDLSLRVDPAYEKISRRFHENPDQFADAFARAWFKLTHRDMGPRSRYLGPEVPAEELIWQDPIPAVDHVLIDEQDVAALKGKILATGVPVSQLVSTAWASASTFRGSDKRGGANGARIRLAPQKDWEVNQPAVLAQVLETLEGIRNEFNSSQSGGKKVSLADLIVLAGCAGIEQAAKKGGHDVKVPFTPGRMDATQEQTDVESFSVMEPIADGFRNYLKGTYAVTAETLLVDKAQLLTLTVPEVTALVGGMRVLNANFGQTQHGVFTDRPETLTNDFFVNVLDMGTEWKPTADNKDLFEGYDRATGKLKWTGTRVDLIFGSNSELRAVAEVYGCADAKEKFVQDFVAAWNKVMNLDRFEAANR.

A cross-link (tryptophyl-tyrosyl-methioninium (Trp-Tyr) (with M-240)) is located at residues 91-214 (WHAAGTYRTG…LAAVQMGLIY (124 aa)). The active-site Proton acceptor is the His-92. Residues 214-240 (YVNPEGPNGNPDPAKAAVDIRETFARM) constitute a cross-link (tryptophyl-tyrosyl-methioninium (Tyr-Met) (with W-91)). His-255 is a binding site for heme b. Positions 338–362 (WKPNGDAGANSIPDPYDPSRRRGPT) are disordered.

This sequence belongs to the peroxidase family. Peroxidase/catalase subfamily. Homodimer or homotetramer. Requires heme b as cofactor. Post-translationally, formation of the three residue Trp-Tyr-Met cross-link is important for the catalase, but not the peroxidase activity of the enzyme.

It catalyses the reaction H2O2 + AH2 = A + 2 H2O. The catalysed reaction is 2 H2O2 = O2 + 2 H2O. In terms of biological role, bifunctional enzyme with both catalase and broad-spectrum peroxidase activity. The polypeptide is Catalase-peroxidase 2 (Cupriavidus pinatubonensis (strain JMP 134 / LMG 1197) (Cupriavidus necator (strain JMP 134))).